The following is a 321-amino-acid chain: Biotin synthase (321 aa).

The Radical SAM core domain occupies 44 to 273; sequence FCGNVFDLCT…DGFVRIAAGR (230 aa). 3 residues coordinate [4Fe-4S] cluster: C62, C66, and C69. 4 residues coordinate [2Fe-2S] cluster: S106, C138, C198, and R268.

It belongs to the radical SAM superfamily. Biotin synthase family. As to quaternary structure, homodimer. The cofactor is [4Fe-4S] cluster. [2Fe-2S] cluster is required as a cofactor.

It carries out the reaction (4R,5S)-dethiobiotin + (sulfur carrier)-SH + 2 reduced [2Fe-2S]-[ferredoxin] + 2 S-adenosyl-L-methionine = (sulfur carrier)-H + biotin + 2 5'-deoxyadenosine + 2 L-methionine + 2 oxidized [2Fe-2S]-[ferredoxin]. Its pathway is cofactor biosynthesis; biotin biosynthesis; biotin from 7,8-diaminononanoate: step 2/2. Catalyzes the conversion of dethiobiotin (DTB) to biotin by the insertion of a sulfur atom into dethiobiotin via a radical-based mechanism. The polypeptide is Biotin synthase (Akkermansia muciniphila (strain ATCC BAA-835 / DSM 22959 / JCM 33894 / BCRC 81048 / CCUG 64013 / CIP 107961 / Muc)).